The chain runs to 448 residues: MDPKYFILILFCGHLNNTFFSKTETITTEKQSQPTLFTSSMSQVLANSQNTTGNPLGQPTQFSDTFSGQSISPAKVTAGQPTPAVYTSSEKPEAHTSAGQPLAYNTKQPTPIANTSSQQAVFTSARQLPSARTSTTQPPKSFVYTFTQQSSSVQIPSRKQITVHNPSTQPTSTVKNSPRSTPGFILDTTSNKQTPQKNNYNSIAAILIGVLLTSMLVAIIIIVLWKCLRKPVLNDQNWAGRSPFADGETPDICMDNIRENEISTKRTSIISLTPWKPSKSTLLADDLEIKLFESSENIEDSNNPKTEKIKDQVNGTSEDSADGSTVGTAVSSSDDADLPPPPPLLDLEGQESNQSDKPTMTIVSPLPNDSTSLPPSLDCLNQDCGDHKSEIIQSFPPLDSLNLPLPPVDFMKNQEDSNLEIQCQEFSIPPNSDQDLNESLPPPPAELL.

The first 21 residues, methionine 1 to serine 21, serve as a signal peptide directing secretion. Residues asparagine 16 and asparagine 50 are each glycosylated (N-linked (GlcNAc...) asparagine). The Extracellular portion of the chain corresponds to lysine 22–serine 202. The disordered stretch occupies residues alanine 74–glutamine 108. A compositionally biased stretch (polar residues) spans serine 97–glutamine 108. Asparagine 114 carries an N-linked (GlcNAc...) asparagine glycan. A helical membrane pass occupies residues isoleucine 203–lysine 226. Residues cysteine 227–leucine 448 lie on the Cytoplasmic side of the membrane. At threonine 249 the chain carries Phosphothreonine. Residues serine 268, serine 271, serine 278, and serine 294 each carry the phosphoserine modification. 2 disordered regions span residues isoleucine 298 to serine 372 and serine 427 to leucine 448. Polar residues-rich tracts occupy residues valine 313–serine 333 and glutamine 350–serine 372.

In terms of tissue distribution, bone marrow, peripheral blood mononuclear cells, fibroblasts and Epstein-Barr virus-transformed lymphoblastoid cell lines. Strongly expressed in granulocytic cells, and weakly on lymphocytes cells.

Its subcellular location is the membrane. In terms of biological role, required for granulocyte differentiation and functionality of hematopoietic progenitor cells through the control of cell cycle progression and survival of hematopoietic progenitor cells. The chain is Protein EVI2B from Homo sapiens (Human).